A 146-amino-acid polypeptide reads, in one-letter code: Cytochrome b5 type B (146 aa).

The propeptide occupies 1 to 11 (MATPEASGSGR). Residues 20-96 (VTYYRLEEVA…LKQYYIGDVH (77 aa)) form the Cytochrome b5 heme-binding domain. Lys30 is modified (N6-acetyllysine). The heme site is built by His55 and His79. Ser80 bears the Phosphoserine mark. The helical transmembrane segment at 119 to 136 (WAYWIVPIVGAILIGFLY) threads the bilayer.

It belongs to the cytochrome b5 family. As to quaternary structure, component of a complex composed of cytochrome b5, NADH-cytochrome b5 reductase (CYB5R3) and MTARC2.

It is found in the mitochondrion outer membrane. Its function is as follows. Cytochrome b5 is a membrane-bound hemoprotein functioning as an electron carrier for several membrane-bound oxygenases. This Rattus norvegicus (Rat) protein is Cytochrome b5 type B (Cyb5b).